Here is a 404-residue protein sequence, read N- to C-terminus: Glucoside xylosyltransferase 1 (404 aa).

The Cytoplasmic portion of the chain corresponds to 1-6 (MRRYLR). The helical; Signal-anchor for type II membrane protein transmembrane segment at 7 to 29 (VVGLCLACGFCSLLYAFSQLAVS) threads the bilayer. The Lumenal segment spans residues 30–404 (LEEGAAGGRR…NRYDTPPKER (375 aa)). Asparagine 201 carries N-linked (GlcNAc...) asparagine glycosylation.

Belongs to the glycosyltransferase 8 family.

The protein localises to the membrane. It catalyses the reaction 3-O-(beta-D-glucosyl)-L-seryl-[EGF-like domain protein] + UDP-alpha-D-xylose = 3-O-[alpha-D-xylosyl-(1-&gt;3)-beta-D-glucosyl]-L-seryl-[EGF-like domain protein] + UDP + H(+). Functionally, glycosyltransferase which elongates the O-linked glucose attached to EGF-like repeats in the extracellular domain of Notch proteins by catalyzing the addition of xylose. The polypeptide is Glucoside xylosyltransferase 1 (Gxylt1) (Mus musculus (Mouse)).